The following is a 127-amino-acid chain: Major sperm protein 78 (127 aa).

Ala-2 carries the N-acetylalanine modification. An MSP domain is found at 9–126 (DIQTQPGTKI…RRKNLPIEYN (118 aa)).

As to expression, sperm.

Its subcellular location is the cell projection. The protein resides in the pseudopodium. The protein localises to the cytoplasm. It localises to the cytoskeleton. Central component in molecular interactions underlying sperm crawling. Forms an extensive filament system that extends from sperm villipoda, along the leading edge of the pseudopod. This chain is Major sperm protein 78 (msp-78), found in Caenorhabditis elegans.